The following is a 283-amino-acid chain: Pyridoxal kinase PdxY (283 aa).

Serine 8 contributes to the substrate binding site. ATP-binding residues include aspartate 110 and glutamate 147. Aspartate 219 provides a ligand contact to substrate.

This sequence belongs to the pyridoxine kinase family. PdxY subfamily. As to quaternary structure, homodimer. Mg(2+) serves as cofactor.

The enzyme catalyses pyridoxal + ATP = pyridoxal 5'-phosphate + ADP + H(+). Its pathway is cofactor metabolism; pyridoxal 5'-phosphate salvage; pyridoxal 5'-phosphate from pyridoxal: step 1/1. Functionally, pyridoxal kinase involved in the salvage pathway of pyridoxal 5'-phosphate (PLP). Catalyzes the phosphorylation of pyridoxal to PLP. The protein is Pyridoxal kinase PdxY of Corynebacterium diphtheriae (strain ATCC 700971 / NCTC 13129 / Biotype gravis).